Consider the following 85-residue polypeptide: U4-theraphotoxin-Hhn1a (85 aa).

The N-terminal stretch at 1 to 22 is a signal peptide; sequence MKMTLIAILTCAAVLVLHITAA. Residues 23–48 constitute a propeptide that is removed on maturation; that stretch reads EELEAESQLMEVGMPDTELEAVDEER. Disulfide bonds link Cys52–Cys66, Cys56–Cys77, and Cys71–Cys82.

The protein belongs to the neurotoxin 12 (Hwtx-2) family. 02 (Hwtx-2) subfamily. In terms of assembly, monomer. Expressed by the venom gland.

The protein localises to the secreted. Its function is as follows. Neurotoxin active on both insects and mammals. The chain is U4-theraphotoxin-Hhn1a from Cyriopagopus hainanus (Chinese bird spider).